The following is a 723-amino-acid chain: MSRKILVTNALPYANGDIHLGHLVGYIQGDIWVRFQRMRGNSVHYVCADDTHGTPIMLRAEKEGITPEQLIDRVHGEHLRDFTDFGVGFDHYHSTHSAENRAYAEEIYGKLLGAGFIETRSIEQFYDPVKEMFLPDRFIKGECPKCGAGDQYGDNCEVCGAAYAPTELKNPYSAVSGAKPVLRTSEHYFFRLSDPRAVEFLRDWTRGTNAGGERRLQAEAANKMKEWLGEAGENKLSDWDISRDAPYFGFEIPGAPGKYFYVWLDAPIGYLASFRHYAERRGDIAVADYTDAARAESHGTELVHFIGKDILYFHALFWPAMLKFAGYRTPTQLCVNGFLTVDGAKMSKSRGTFITARSYIVQGLNPEWLRYYFASKSNGTMEDVDLNLDDMIAKVNSDLVGKYVNIASRCAGFIAKRFDGKLGASDPKATADFESAYESAQIAQAYDERDYGRALREIMRLADLANQYVNDHKPWELAKQDGQDAQLHVVCSTALTLFRDLTLYLKPVLPGLAAKVEAFLALPPLQWNDSWKPLPAGHAITAYQHLMTRVERKQIDALLEANRESLAPAAATAPAKDAKPAKEAGSQQRHAEKQQHAAGVSETASPHISIDDFTKVDLRIAKIVDAQHVEGADKLIRLQLDIGETDEAGNPKPRQVFAGIKSAYDPATLVGRLTVMVANLAPRKMKFGMSEGMVLAASDPDGKTGGLYILAPDEGAQAGMRVK.

The 'HIGH' region motif lies at 12–22 (PYANGDIHLGH). Zn(2+) contacts are provided by Cys143, Cys146, Cys156, and Cys159. The short motif at 345–349 (KMSKS) is the 'KMSKS' region element. ATP is bound at residue Lys348. The disordered stretch occupies residues 568 to 604 (PAAATAPAKDAKPAKEAGSQQRHAEKQQHAAGVSETA). Residues 612–723 (DFTKVDLRIA…EGAQAGMRVK (112 aa)) enclose the tRNA-binding domain.

The protein belongs to the class-I aminoacyl-tRNA synthetase family. MetG type 1 subfamily. As to quaternary structure, homodimer. Zn(2+) is required as a cofactor.

The protein resides in the cytoplasm. It catalyses the reaction tRNA(Met) + L-methionine + ATP = L-methionyl-tRNA(Met) + AMP + diphosphate. Functionally, is required not only for elongation of protein synthesis but also for the initiation of all mRNA translation through initiator tRNA(fMet) aminoacylation. This chain is Methionine--tRNA ligase, found in Azoarcus sp. (strain BH72).